We begin with the raw amino-acid sequence, 414 residues long: Esterase FrsA (414 aa).

It belongs to the FrsA family.

It catalyses the reaction a carboxylic ester + H2O = an alcohol + a carboxylate + H(+). In terms of biological role, catalyzes the hydrolysis of esters. The chain is Esterase FrsA from Escherichia coli O157:H7.